Here is a 141-residue protein sequence, read N- to C-terminus: MNNLTNPSKLALNSSLTKTGRRKTSIATVQLFPGNGEFTINGISGIEYMQQKEELIFAIQEPLHFLKLKNEFNLIIKVKGGGLVGQVNAIKLGIARALCEFDLTYRNSLKLKGFLTRDPRCKERKKYGLKKARKAPQFSKR.

The protein belongs to the universal ribosomal protein uS9 family.

Its subcellular location is the plastid. The protein resides in the chloroplast. This Tupiella akineta (Green alga) protein is Small ribosomal subunit protein uS9c (rps9).